The following is a 234-amino-acid chain: Zinc finger BED domain-containing protein 3 (234 aa).

A disordered region spans residues 19-42; the sequence is AAARGGQCPGLGPAPTPTPPGRLG. Residues 43–104 form a BED-type zinc finger; that stretch reads APYSEAWGYF…SAHRRELESS (62 aa). Zn(2+) contacts are provided by Cys-69, Cys-72, His-92, and His-97. Disordered regions lie at residues 94–126 and 202–225; these read RSAH…AAPE and REGA…GDRD. Over residues 111 to 122 the composition is skewed to pro residues; sequence PAAPCPPPPGPA. Basic and acidic residues predominate over residues 216-225; sequence LKDDPEGDRD.

As to quaternary structure, associates with the subcortical maternal complex (SCMC) composed of at least NLRP5, KHDC3L, OOEP, and TLE6 via interaction with NLRP5 and TLE6. Interacts with AXIN1; the interaction is direct, enhanced by protein kinase GSK3B and casein kinase CSNK1E activities and decreases GSK3B-induced beta-catenin serine and threonine phosphorylations. In terms of tissue distribution, secreted in blood plasma, and expressed in skeletal muscle and adipose tissue (at protein level).

It localises to the cytoplasm. The protein resides in the membrane. The protein localises to the secreted. In terms of biological role, acts as a positive regulator in the activation of the canonical Wnt/beta-catenin signaling pathway by stabilizing cytoplasmic beta-catenin. Involved in transcription activation of Wnt target gene expression. Plays a role in symmetric division of blastomeres in the early stages of embryogenesis via regulation of mitotic spindle central positioning and organization of the F-actin filament network. Plays a role in regulating the distribution of cellular organelles, via modulation of cytoskeletal dynamics and cytoplasmic lattice formation. In Homo sapiens (Human), this protein is Zinc finger BED domain-containing protein 3 (ZBED3).